Here is a 300-residue protein sequence, read N- to C-terminus: Ribonuclease HIII (300 aa).

In terms of domain architecture, RNase H type-2 spans 83–300; that stretch reads IPIIGSDEVG…THKAQALLTK (218 aa). 3 residues coordinate a divalent metal cation: D89, E90, and D194.

This sequence belongs to the RNase HII family. RnhC subfamily. The cofactor is Mn(2+). Mg(2+) serves as cofactor.

It localises to the cytoplasm. It catalyses the reaction Endonucleolytic cleavage to 5'-phosphomonoester.. Functionally, endonuclease that specifically degrades the RNA of RNA-DNA hybrids. This Streptococcus pyogenes serotype M4 (strain MGAS10750) protein is Ribonuclease HIII.